Here is a 306-residue protein sequence, read N- to C-terminus: MEQFLLSVGLLVCLVCLVKCVRFSRYLFLSFCKALPGSFLRSMGQWAVITGAGDGIGKAYSFELARHGLNVVLISRTLEKLQVISEEIERTTGSRVKVVQADFTREDIYDHIEEQLKGLEIGVLVNNVGMLPNLLPSHFLSTSGESQSVIHCNITSVVKMTQLVLKHMESRRRGLILNISSGVGVRPWPLYSLYSASKAFVCTFSKALNVEYRDKGIIIQVLTPYSVSTPMTKYLNTSRVTKTADEFVKESLKYVTIGAETCGCLAHEILAIILNLIPSRIFYSSTTQRFLLKQFSDYLKSNISNR.

NADP(+) is bound at residue 44 to 73 (GQWAVITGAGDGIGKAYSFELARHGLNVVL). Serine 181 is a binding site for substrate. The active-site Proton acceptor is tyrosine 194.

This sequence belongs to the short-chain dehydrogenases/reductases (SDR) family. 17-beta-HSD 3 subfamily.

The protein resides in the endoplasmic reticulum. It carries out the reaction a 17beta-hydroxy steroid + NADP(+) = a 17-oxo steroid + NADPH + H(+). It catalyses the reaction testosterone + NADP(+) = androst-4-ene-3,17-dione + NADPH + H(+). The enzyme catalyses 17beta-estradiol + NADP(+) = estrone + NADPH + H(+). The catalysed reaction is 3beta-hydroxyandrost-5-en-17-one + NADPH + H(+) = androst-5-en-3beta,17beta-diol + NADP(+). It carries out the reaction 17beta-hydroxy-5alpha-androstan-3-one + NADP(+) = 5alpha-androstan-3,17-dione + NADPH + H(+). It catalyses the reaction androsterone + NADPH + H(+) = 5alpha-androstane-3alpha,17beta-diol + NADP(+). The enzyme catalyses 3beta-hydroxy-5alpha-androstan-17-one + NADPH + H(+) = 5alpha-androstane-3beta,17beta-diol + NADP(+). The catalysed reaction is androst-4-ene-3,11,17-trione + NADPH + H(+) = 17beta-hydroxyandrost-4-ene-3,11-dione + NADP(+). It carries out the reaction 11beta-hydroxyandrost-4-ene-3,17-dione + NADPH + H(+) = 11beta,17beta-dihydroxyandrost-4-ene-3-one + NADP(+). It participates in hormone biosynthesis; testosterone biosynthesis. It functions in the pathway steroid metabolism. Catalyzes the conversion of 17-oxosteroids to 17beta-hydroxysteroids. Favors the reduction of androstenedione to testosterone. Testosterone is the key androgen driving male development and function. Uses NADPH while the two other EDH17B enzymes use NADH. Androgens such as epiandrosterone, dehydroepiandrosterone, androsterone and androstanedione are accepted as substrates and reduced at C-17. Can reduce 11-ketoandrostenedione as well as 11beta-hydroxyandrostenedione at C-17 to the respective testosterone forms. Plays a role in the rate-limiting-step for the maximum level of testosterone production by the testis but does not affect basal testosterone production. The polypeptide is 17-beta-hydroxysteroid dehydrogenase type 3 (Rattus norvegicus (Rat)).